Here is a 246-residue protein sequence, read N- to C-terminus: Enolase-phosphatase E1 (246 aa).

Residues D11 and E13 each coordinate Mg(2+). Substrate contacts are provided by residues 140–141 and K174; that span reads SS. D199 contacts Mg(2+).

It belongs to the HAD-like hydrolase superfamily. MasA/MtnC family. In terms of assembly, monomer. Requires Mg(2+) as cofactor.

Its subcellular location is the cytoplasm. The protein localises to the nucleus. It carries out the reaction 5-methylsulfanyl-2,3-dioxopentyl phosphate + H2O = 1,2-dihydroxy-5-(methylsulfanyl)pent-1-en-3-one + phosphate. It participates in amino-acid biosynthesis; L-methionine biosynthesis via salvage pathway; L-methionine from S-methyl-5-thio-alpha-D-ribose 1-phosphate: step 3/6. Its pathway is amino-acid biosynthesis; L-methionine biosynthesis via salvage pathway; L-methionine from S-methyl-5-thio-alpha-D-ribose 1-phosphate: step 4/6. In terms of biological role, bifunctional enzyme that catalyzes the enolization of 2,3-diketo-5-methylthiopentyl-1-phosphate (DK-MTP-1-P) into the intermediate 2-hydroxy-3-keto-5-methylthiopentenyl-1-phosphate (HK-MTPenyl-1-P), which is then dephosphorylated to form the acireductone 1,2-dihydroxy-3-keto-5-methylthiopentene (DHK-MTPene). The protein is Enolase-phosphatase E1 of Acyrthosiphon pisum (Pea aphid).